Here is a 351-residue protein sequence, read N- to C-terminus: Sulfate/thiosulfate import ATP-binding protein CysA (351 aa).

The ABC transporter domain occupies 3 to 237 (ITVRNLHKRF…PRSAFVYEFL (235 aa)). 35-42 (GPSGCGKT) contacts ATP.

The protein belongs to the ABC transporter superfamily. Sulfate/tungstate importer (TC 3.A.1.6) family. The complex is composed of two ATP-binding proteins (CysA), two transmembrane proteins (CysT and CysW) and a solute-binding protein (CysP).

The protein localises to the cell inner membrane. It catalyses the reaction sulfate(out) + ATP + H2O = sulfate(in) + ADP + phosphate + H(+). The enzyme catalyses thiosulfate(out) + ATP + H2O = thiosulfate(in) + ADP + phosphate + H(+). Functionally, part of the ABC transporter complex CysAWTP involved in sulfate/thiosulfate import. Responsible for energy coupling to the transport system. The polypeptide is Sulfate/thiosulfate import ATP-binding protein CysA (Burkholderia mallei (strain ATCC 23344)).